Reading from the N-terminus, the 373-residue chain is Arabinonate dehydratase (373 aa).

Residues Asp199, Glu225, and Glu251 each contribute to the Mg(2+) site.

This sequence belongs to the mandelate racemase/muconate lactonizing enzyme family. Homooctamer. Mg(2+) serves as cofactor.

The catalysed reaction is D-arabinonate = 2-dehydro-3-deoxy-D-arabinonate + H2O. With respect to regulation, inhibited by substrate levels above 8 mM. Functionally, catalyzes the dehydration of D-arabinonate to 2-keto-3-deoxy-D-arabinonate. Participates in a pentose oxidation pathway that converts D-arabinonate to 2-oxoglutarate. This is Arabinonate dehydratase from Saccharolobus solfataricus (strain ATCC 35092 / DSM 1617 / JCM 11322 / P2) (Sulfolobus solfataricus).